Here is a 133-residue protein sequence, read N- to C-terminus: Probable 4-amino-4-deoxy-L-arabinose-phosphoundecaprenol flippase subunit ArnF (133 aa).

Residues 1–5 (MKTGY) are Cytoplasmic-facing. Residues 6 to 26 (LWAIASALLVTVAQLLLKIGM) form a helical membrane-spanning segment. Topologically, residues 27 to 47 (SELPDLQLEKQWFDLHWLWAN) are periplasmic. The helical transmembrane segment at 48 to 68 (IIPISVVFVGLIGYVLSMVCW) threads the bilayer. In terms of domain architecture, EamA spans 51-125 (ISVVFVGLIG…IMLGVWLISQ (75 aa)). At 69–80 (LLTLRTIPLNKA) the chain is on the cytoplasmic side. A helical transmembrane segment spans residues 81–101 (YPLISLSYVFVYILAVVLPWF). Topologically, residues 102-103 (QE) are periplasmic. A helical transmembrane segment spans residues 104-124 (TLSWSKTIGIIFIMLGVWLIS). The Cytoplasmic segment spans residues 125–133 (QKTEQTTSH).

The protein belongs to the ArnF family. Heterodimer of ArnE and ArnF.

It localises to the cell inner membrane. It functions in the pathway bacterial outer membrane biogenesis; lipopolysaccharide biosynthesis. In terms of biological role, translocates 4-amino-4-deoxy-L-arabinose-phosphoundecaprenol (alpha-L-Ara4N-phosphoundecaprenol) from the cytoplasmic to the periplasmic side of the inner membrane. The sequence is that of Probable 4-amino-4-deoxy-L-arabinose-phosphoundecaprenol flippase subunit ArnF from Proteus mirabilis (strain HI4320).